We begin with the raw amino-acid sequence, 201 residues long: MYIGRFLVLGKTDEGNPFVTYRVSSRSFPNRVAKVMNDETVAILPKDLEEMFKNPYITYNCVKLVGDVAVATNGSHTDIIADKIKLGLPIRDALSYSLLTMDYEKDDYNTPRIAVVITKDEAYMGYVTDSDVRIKKVELEAGKAYYLSVYEACKITEHQVISVTGKTAEEVTKFVMDYEEFEKPVTAATVLVKDGFKLATI.

Belongs to the archaeal IMP cyclohydrolase family.

The catalysed reaction is IMP + H2O = 5-formamido-1-(5-phospho-D-ribosyl)imidazole-4-carboxamide. It participates in purine metabolism; IMP biosynthesis via de novo pathway; IMP from 5-formamido-1-(5-phospho-D-ribosyl)imidazole-4-carboxamide: step 1/1. In terms of biological role, catalyzes the cyclization of 5-formylamidoimidazole-4-carboxamide ribonucleotide to IMP. The polypeptide is IMP cyclohydrolase (Methanococcus maripaludis (strain DSM 14266 / JCM 13030 / NBRC 101832 / S2 / LL)).